Consider the following 298-residue polypeptide: Porphobilinogen deaminase (298 aa).

Residue C239 is modified to S-(dipyrrolylmethanemethyl)cysteine.

Belongs to the HMBS family. In terms of assembly, monomer. It depends on dipyrromethane as a cofactor.

The catalysed reaction is 4 porphobilinogen + H2O = hydroxymethylbilane + 4 NH4(+). It participates in porphyrin-containing compound metabolism; protoporphyrin-IX biosynthesis; coproporphyrinogen-III from 5-aminolevulinate: step 2/4. In terms of biological role, tetrapolymerization of the monopyrrole PBG into the hydroxymethylbilane pre-uroporphyrinogen in several discrete steps. In Ehrlichia chaffeensis (strain ATCC CRL-10679 / Arkansas), this protein is Porphobilinogen deaminase.